Reading from the N-terminus, the 474-residue chain is MKHIVKNIHFVGIGGAGMSGIAEVLLNLGYKVSGSDVGNNAATRRLASLGATVMHGHDAANVSGANAVVVSTAVSGDNPEVLAARSQRIPVVPRAVMLAELMRLKQGVAIAGTHGKTTTTSLVASVLAEGGLDPTFVIGGRLNSAGANARLGTGDFIVAEADESDASFLNLFPVIEVITNIDADHMDTYGHDFARLKQAFIEFTQRLPFYGIAVLCVDDPNVREILPFVSKPVVRYGFAEDAQIRAVDARAVDGQMHFTVLRQLNGHTEPPLEIVLNLPGLHNVQNALAAIAIATELEVPDAAIVKALREFHGVGRRFQRYGEVATPDGAGTFTLVDDYGHHPVEMAATLAAARGAFPERRLVLAFQPHRFTRTRDCFEDFVKVLGTVDALLLSEVYAAGEAPIVAADGRALTRALRVAGKVEPVFVEQMEEMPQAILNAVRPGDVVVTMGAGSIGGVPGQLVSHQQALQGSQA.

112–118 lines the ATP pocket; that stretch reads GTHGKTT.

It belongs to the MurCDEF family.

The protein localises to the cytoplasm. It catalyses the reaction UDP-N-acetyl-alpha-D-muramate + L-alanine + ATP = UDP-N-acetyl-alpha-D-muramoyl-L-alanine + ADP + phosphate + H(+). It functions in the pathway cell wall biogenesis; peptidoglycan biosynthesis. Cell wall formation. The polypeptide is UDP-N-acetylmuramate--L-alanine ligase (Cupriavidus taiwanensis (strain DSM 17343 / BCRC 17206 / CCUG 44338 / CIP 107171 / LMG 19424 / R1) (Ralstonia taiwanensis (strain LMG 19424))).